We begin with the raw amino-acid sequence, 393 residues long: Bone morphogenetic protein 2 (393 aa).

Positions Met-1–Gly-19 are cleaved as a signal peptide. A propeptide spans Gly-20–Arg-279 (cleaved by PCSK5). Phosphoserine is present on Ser-85. N-linked (GlcNAc...) asparagine glycans are attached at residues Asn-133, Asn-161, and Asn-197. The segment at Gly-268–Lys-290 is disordered. Basic residues predominate over residues His-271–Lys-290. 3 cysteine pairs are disulfide-bonded: Cys-293–Cys-358, Cys-322–Cys-390, and Cys-326–Cys-392. A glycan (N-linked (GlcNAc...) asparagine) is linked at Asn-335.

This sequence belongs to the TGF-beta family. Homodimer; disulfide-linked. Interacts with SOSTDC1. Interacts with GREM2, RGMA, RGMB and RGMC. Interacts with ASPN. Interacts with MAFP5. Interacts with FBN1 (via N-terminal domain) and FBN2. Interacts with type I receptor BMPR1A. Interacts with type II receptor BMPR2. Interacts with SCUBE3. Interacts with TNFAIP6 (primarily via Link domain); this interaction is inhibited by hyaluronan. Interacts with ERFE. Interacts with BMPR1A/ALK3; the interaction may induce HAMP expression. Forms heterodimers with BMP6 in vitro; the heterodimer then binds to its receptor BMPR1A /ALK3 and may induce HAMP expression. Interacts with TGFBR3. Expressed in femur, calvaria, trachea, lung and ovary.

It localises to the secreted. In terms of biological role, growth factor of the TGF-beta superfamily that plays essential roles in many developmental processes, including cardiogenesis, neurogenesis, and osteogenesis. Induces cartilage and bone formation. Initiates the canonical BMP signaling cascade by associating with type I receptor BMPR1A and type II receptor BMPR2. Once all three components are bound together in a complex at the cell surface, BMPR2 phosphorylates and activates BMPR1A. In turn, BMPR1A propagates signal by phosphorylating SMAD1/5/8 that travel to the nucleus and act as activators and repressors of transcription of target genes. Also acts to promote expression of HAMP, via the interaction with its receptor BMPR1A/ALK3. Can also signal through non-canonical pathways such as ERK/MAP kinase signaling cascade that regulates osteoblast differentiation. Also stimulates the differentiation of myoblasts into osteoblasts via the EIF2AK3-EIF2A-ATF4 pathway by stimulating EIF2A phosphorylation which leads to increased expression of ATF4 which plays a central role in osteoblast differentiation. Acts as a positive regulator of odontoblast differentiation during mesenchymal tooth germ formation, expression is repressed during the bell stage by MSX1-mediated inhibition of CTNNB1 signaling. The polypeptide is Bone morphogenetic protein 2 (Bmp2) (Rattus norvegicus (Rat)).